The chain runs to 88 residues: Putative membrane protein insertion efficiency factor (88 aa).

Belongs to the UPF0161 family.

The protein resides in the cell inner membrane. Could be involved in insertion of integral membrane proteins into the membrane. This is Putative membrane protein insertion efficiency factor from Rickettsia canadensis (strain McKiel).